The primary structure comprises 2259 residues: Protein Ycf2 (2259 aa).

ATP is bound at residue 1556 to 1563 (GSQETGRS).

The protein belongs to the Ycf2 family.

Its subcellular location is the plastid. It is found in the chloroplast stroma. Functionally, probable ATPase of unknown function. Its presence in a non-photosynthetic plant (Epifagus virginiana) and experiments in tobacco indicate that it has an essential function which is probably not related to photosynthesis. This chain is Protein Ycf2, found in Physcomitrium patens (Spreading-leaved earth moss).